The chain runs to 431 residues: Glucose-1-phosphate adenylyltransferase (431 aa).

Lys-39 lines the beta-D-fructose 1,6-bisphosphate pocket. Residues Arg-40, His-46, and Arg-52 each coordinate AMP. Tyr-114 is a binding site for alpha-D-glucose 1-phosphate. Arg-130 is a binding site for AMP. Alpha-D-glucose 1-phosphate is bound by residues Gly-179, 194–195 (EK), and Ser-212. AMP is bound by residues Glu-370 and Arg-386. Beta-D-fructose 1,6-bisphosphate-binding positions include 419 to 423 (REMLR) and 429 to 431 (QER).

The protein belongs to the bacterial/plant glucose-1-phosphate adenylyltransferase family. In terms of assembly, homotetramer.

It catalyses the reaction alpha-D-glucose 1-phosphate + ATP + H(+) = ADP-alpha-D-glucose + diphosphate. It functions in the pathway glycan biosynthesis; glycogen biosynthesis. With respect to regulation, allosterically activated by fructose-1,6-bisphosphate (F16BP) and inhibited by AMP. In terms of biological role, involved in the biosynthesis of ADP-glucose, a building block required for the elongation reactions to produce glycogen. Catalyzes the reaction between ATP and alpha-D-glucose 1-phosphate (G1P) to produce pyrophosphate and ADP-Glc. This Shigella dysenteriae serotype 1 (strain Sd197) protein is Glucose-1-phosphate adenylyltransferase.